The chain runs to 411 residues: Aspartate kinase (411 aa).

The 84-residue stretch at 265-348 folds into the ACT domain; it reads LTIRGVPDTP…KIAKVSIVGV (84 aa).

It belongs to the aspartokinase family.

It is found in the cytoplasm. The catalysed reaction is L-aspartate + ATP = 4-phospho-L-aspartate + ADP. It participates in amino-acid biosynthesis; L-lysine biosynthesis via DAP pathway; (S)-tetrahydrodipicolinate from L-aspartate: step 1/4. It functions in the pathway amino-acid biosynthesis; L-methionine biosynthesis via de novo pathway; L-homoserine from L-aspartate: step 1/3. Its pathway is amino-acid biosynthesis; L-threonine biosynthesis; L-threonine from L-aspartate: step 1/5. Allosterically feedback inhibited by L-lysine and L-threonine individually and also subject to a concerted feedback inhibition by these amino acids. In terms of biological role, involved in the biosynthesis of L-aspartate-beta-semialdehyde which is a central intermediate in the biosynthesis of different amino acids (L-lysine, L-methionine, L-threonine). Catalyzes the phosphorylation of the beta-carboxyl group of L-aspartate to yield 4-phospho-L-aspartate. This chain is Aspartate kinase, found in Pseudomonas putida (strain ATCC 47054 / DSM 6125 / CFBP 8728 / NCIMB 11950 / KT2440).